Here is a 152-residue protein sequence, read N- to C-terminus: Probable ribose-5-phosphate isomerase B (152 aa).

Asp12 to His13 is a D-ribulose 5-phosphate binding site. Cys70 (proton acceptor) is an active-site residue. Gly71–Gly75 lines the D-ribulose 5-phosphate pocket. His103 acts as the Proton donor in catalysis. D-ribulose 5-phosphate-binding residues include Asp104, Arg114, Arg137, and Arg141.

Belongs to the LacAB/RpiB family. Homodimer.

It carries out the reaction aldehydo-D-ribose 5-phosphate = D-ribulose 5-phosphate. Its pathway is carbohydrate degradation; pentose phosphate pathway; D-ribose 5-phosphate from D-ribulose 5-phosphate (non-oxidative stage): step 1/1. Functionally, catalyzes the interconversion of ribulose-5-P and ribose-5-P. This Mycoplasma pneumoniae (strain ATCC 29342 / M129 / Subtype 1) (Mycoplasmoides pneumoniae) protein is Probable ribose-5-phosphate isomerase B.